A 511-amino-acid chain; its full sequence is Ribonuclease Y (511 aa).

The chain crosses the membrane as a helical span at residues 3–23 (VGILIGIIILGVVGFIQYTLI). The 86-residue stretch at 201–286 (TVHVVALPND…EMVERAIKDV (86 aa)) folds into the KH domain. An HD domain is found at 327–420 (VLKHSIEVSY…VQAADAISAA (94 aa)).

Belongs to the RNase Y family.

Its subcellular location is the cell membrane. Its function is as follows. Endoribonuclease that initiates mRNA decay. This Clostridium perfringens (strain ATCC 13124 / DSM 756 / JCM 1290 / NCIMB 6125 / NCTC 8237 / Type A) protein is Ribonuclease Y.